The following is a 360-amino-acid chain: Viral protein TPX (360 aa).

Positions T269–T289 are disordered. A Thr-Pro(N) repeat occupies V270 to T291. Residues S275–T289 show a composition bias toward pro residues. The interval P278–T353 is 3 Thr-Pro repeats regions and two near identical repeats. A repeat spans Y292–V301. One copy of the Thr-Pro(N) repeat lies at T302–T322. Positions Y323 to V332 form a repeat. The segment at V332–I360 is disordered. The stretch at T333–T353 is one Thr-Pro(N) repeat. Residues S335–T351 are compositionally biased toward pro residues.

This is Viral protein TPX from Thermoproteus tenax (TTV1).